Reading from the N-terminus, the 122-residue chain is S-adenosylmethionine decarboxylase proenzyme (122 aa).

The active-site Schiff-base intermediate with substrate; via pyruvic acid is S63. S63 is subject to Pyruvic acid (Ser); by autocatalysis. H68 (proton acceptor; for processing activity) is an active-site residue. The Proton donor; for catalytic activity role is filled by C83.

It belongs to the prokaryotic AdoMetDC family. Type 1 subfamily. Heterotetramer of two alpha and two beta chains arranged as a dimer of alpha/beta heterodimers. Requires pyruvate as cofactor. In terms of processing, is synthesized initially as an inactive proenzyme. Formation of the active enzyme involves a self-maturation process in which the active site pyruvoyl group is generated from an internal serine residue via an autocatalytic post-translational modification. Two non-identical subunits are generated from the proenzyme in this reaction, and the pyruvate is formed at the N-terminus of the alpha chain, which is derived from the carboxyl end of the proenzyme. The post-translation cleavage follows an unusual pathway, termed non-hydrolytic serinolysis, in which the side chain hydroxyl group of the serine supplies its oxygen atom to form the C-terminus of the beta chain, while the remainder of the serine residue undergoes an oxidative deamination to produce ammonia and the pyruvoyl group blocking the N-terminus of the alpha chain.

The catalysed reaction is S-adenosyl-L-methionine + H(+) = S-adenosyl 3-(methylsulfanyl)propylamine + CO2. Its pathway is amine and polyamine biosynthesis; S-adenosylmethioninamine biosynthesis; S-adenosylmethioninamine from S-adenosyl-L-methionine: step 1/1. Functionally, catalyzes the decarboxylation of S-adenosylmethionine to S-adenosylmethioninamine (dcAdoMet), the propylamine donor required for the synthesis of the polyamines spermine and spermidine from the diamine putrescine. The protein is S-adenosylmethionine decarboxylase proenzyme of Methanococcus maripaludis (strain C7 / ATCC BAA-1331).